We begin with the raw amino-acid sequence, 336 residues long: UDP-3-O-acylglucosamine N-acyltransferase (336 aa).

The active-site Proton acceptor is the H236.

The protein belongs to the transferase hexapeptide repeat family. LpxD subfamily. As to quaternary structure, homotrimer.

It carries out the reaction a UDP-3-O-[(3R)-3-hydroxyacyl]-alpha-D-glucosamine + a (3R)-hydroxyacyl-[ACP] = a UDP-2-N,3-O-bis[(3R)-3-hydroxyacyl]-alpha-D-glucosamine + holo-[ACP] + H(+). The protein operates within bacterial outer membrane biogenesis; LPS lipid A biosynthesis. In terms of biological role, catalyzes the N-acylation of UDP-3-O-acylglucosamine using 3-hydroxyacyl-ACP as the acyl donor. Is involved in the biosynthesis of lipid A, a phosphorylated glycolipid that anchors the lipopolysaccharide to the outer membrane of the cell. The protein is UDP-3-O-acylglucosamine N-acyltransferase of Aromatoleum aromaticum (strain DSM 19018 / LMG 30748 / EbN1) (Azoarcus sp. (strain EbN1)).